A 330-amino-acid polypeptide reads, in one-letter code: MELLSTPHSIEINNITCDSFRISWAMEDSDLERVTHYFIDLNKKENKNSNKFKHRDVPTKLVAKAVPLPMTVRGHWFLSPRTEYSVAVQTAVKQSDGEYLVSGWSETVEFCTGDYAKEHLAQLQEKAEQIAGRMLRFSVFYRNHHKEYFQHARTHCGNVLQPYLKDNSGSHGSPTSGMLHGVFFSCNTEFNTGQPPQDSPYGRWRFQIPAQRLFNPSTNLYFADFYCMYTAYHYAILVLAPKGSLGDRFCRDRLPLLDIACNKFLTCSVEDGELIFRHAQDLILEIIYTEPVDLSLGTLGEISGHQLMSLSTADAKKDPSCKTCNISVGR.

Residues 6–115 (TPHSIEINNI…ETVEFCTGDY (110 aa)) form the Fibronectin type-III domain. N-linked (GlcNAc...) asparagine glycans are attached at residues N14 and N325.

Belongs to the PHYHIP family. As to quaternary structure, interacts with PHYH and ADGRB1. As to expression, highly expressed in the brain.

Its interaction with PHYH suggests a role in the development of the central system. This Mus musculus (Mouse) protein is Phytanoyl-CoA hydroxylase-interacting protein (Phyhip).